Reading from the N-terminus, the 76-residue chain is DNA-directed RNA polymerase subunit epsilon (76 aa).

It belongs to the RNA polymerase subunit epsilon family. As to quaternary structure, RNAP is composed of a core of 2 alpha, a beta and a beta' subunit. The core is associated with a delta subunit, and at least one of epsilon or omega. When a sigma factor is associated with the core the holoenzyme is formed, which can initiate transcription.

It catalyses the reaction RNA(n) + a ribonucleoside 5'-triphosphate = RNA(n+1) + diphosphate. A non-essential component of RNA polymerase (RNAP). The chain is DNA-directed RNA polymerase subunit epsilon from Streptococcus pyogenes serotype M1.